The chain runs to 181 residues: Akirin-2 (181 aa).

Residues 18-48 form a disordered region; the sequence is SPAASPKRRRCAPLSPSGPSPQKYLRLEPSP. Positions 23 to 28 match the Nuclear localization signal motif; the sequence is PKRRRC. Residues 178–181 carry the SYVS motif motif; sequence SYVS.

Belongs to the akirin family. Homodimer. Interacts with actl6a/baf53a. Interacts with gmnn.

Its subcellular location is the nucleus. Molecular adapter that acts as a bridge between a variety of multiprotein complexes, and which is involved in embryonic development, immunity, myogenesis and brain development. Plays a key role in nuclear protein degradation by promoting import of proteasomes into the nucleus: acts by bridging fully assembled 20S proteasomes with nuclear import receptor ipo9. Involved in both neural precursor maintenance and terminal neural differentiation: bridges gmnn and actl6a/baf53a in neural progenitor cells, antagonizing the activity of gmnn, thereby suppressing sox2 expression. Also required for proper activation of neurod1 and neuronal differentiation. Involved in myogenesis: required for skeletal muscle formation and skeletal development, possibly by regulating expression of muscle differentiation factors. The sequence is that of Akirin-2 from Xenopus laevis (African clawed frog).